Reading from the N-terminus, the 223-residue chain is Ubiquitin carboxyl-terminal hydrolase isozyme L1 (223 aa).

Methionine 1 carries the N-acetylmethionine modification. Residues glutamine 2 to lysine 221 enclose the UCH catalytic domain. The segment at proline 5 to proline 10 is interaction with ubiquitin. The Nucleophile role is filled by cysteine 90. Serine 125 bears the Phosphoserine mark. Histidine 161 acts as the Proton donor in catalysis. Residues glutamate 211–alanine 216 are interaction with ubiquitin. Cysteine 220 is lipidated: S-farnesyl cysteine. Positions lysine 221–alanine 223 are cleaved as a propeptide — removed in mature form.

This sequence belongs to the peptidase C12 family. As to quaternary structure, monomer. Homodimer. Interacts with COPS5 and SNCA. Post-translationally, O-glycosylated.

Its subcellular location is the cytoplasm. It localises to the endoplasmic reticulum membrane. It carries out the reaction Thiol-dependent hydrolysis of ester, thioester, amide, peptide and isopeptide bonds formed by the C-terminal Gly of ubiquitin (a 76-residue protein attached to proteins as an intracellular targeting signal).. Ubiquitin-protein hydrolase involved both in the processing of ubiquitin precursors and of ubiquitinated proteins. This enzyme is a thiol protease that recognizes and hydrolyzes a peptide bond at the C-terminal glycine of ubiquitin. Also binds to free monoubiquitin and may prevent its degradation in lysosomes. The homodimer may have ATP-independent ubiquitin ligase activity. The chain is Ubiquitin carboxyl-terminal hydrolase isozyme L1 (UCHL1) from Equus caballus (Horse).